The sequence spans 218 residues: Protein GrpE (218 aa).

Residues Met-1 to Gly-75 form a disordered region. The span at Ser-23–Glu-40 shows a compositional bias: basic and acidic residues. Positions Ser-48–Gly-75 are enriched in acidic residues.

This sequence belongs to the GrpE family. As to quaternary structure, homodimer.

It is found in the cytoplasm. In terms of biological role, participates actively in the response to hyperosmotic and heat shock by preventing the aggregation of stress-denatured proteins, in association with DnaK and GrpE. It is the nucleotide exchange factor for DnaK and may function as a thermosensor. Unfolded proteins bind initially to DnaJ; upon interaction with the DnaJ-bound protein, DnaK hydrolyzes its bound ATP, resulting in the formation of a stable complex. GrpE releases ADP from DnaK; ATP binding to DnaK triggers the release of the substrate protein, thus completing the reaction cycle. Several rounds of ATP-dependent interactions between DnaJ, DnaK and GrpE are required for fully efficient folding. In Corynebacterium glutamicum (strain ATCC 13032 / DSM 20300 / JCM 1318 / BCRC 11384 / CCUG 27702 / LMG 3730 / NBRC 12168 / NCIMB 10025 / NRRL B-2784 / 534), this protein is Protein GrpE.